Consider the following 330-residue polypeptide: DNA-directed RNA polymerase subunit alpha (330 aa).

The interval 1 to 232 (MAILAFQKPE…SHFSLFAENK (232 aa)) is alpha N-terminal domain (alpha-NTD). The alpha C-terminal domain (alpha-CTD) stretch occupies residues 248 to 330 (EDSLHMRQLL…DISKYKLDKD (83 aa)).

The protein belongs to the RNA polymerase alpha chain family. In terms of assembly, homodimer. The RNAP catalytic core consists of 2 alpha, 1 beta, 1 beta' and 1 omega subunit. When a sigma factor is associated with the core the holoenzyme is formed, which can initiate transcription.

The enzyme catalyses RNA(n) + a ribonucleoside 5'-triphosphate = RNA(n+1) + diphosphate. Its function is as follows. DNA-dependent RNA polymerase catalyzes the transcription of DNA into RNA using the four ribonucleoside triphosphates as substrates. This chain is DNA-directed RNA polymerase subunit alpha, found in Porphyromonas gingivalis (strain ATCC BAA-308 / W83).